A 237-amino-acid polypeptide reads, in one-letter code: Leucyl/phenylalanyl-tRNA--protein transferase (237 aa).

Belongs to the L/F-transferase family.

It localises to the cytoplasm. The catalysed reaction is N-terminal L-lysyl-[protein] + L-leucyl-tRNA(Leu) = N-terminal L-leucyl-L-lysyl-[protein] + tRNA(Leu) + H(+). The enzyme catalyses N-terminal L-arginyl-[protein] + L-leucyl-tRNA(Leu) = N-terminal L-leucyl-L-arginyl-[protein] + tRNA(Leu) + H(+). It catalyses the reaction L-phenylalanyl-tRNA(Phe) + an N-terminal L-alpha-aminoacyl-[protein] = an N-terminal L-phenylalanyl-L-alpha-aminoacyl-[protein] + tRNA(Phe). Its function is as follows. Functions in the N-end rule pathway of protein degradation where it conjugates Leu, Phe and, less efficiently, Met from aminoacyl-tRNAs to the N-termini of proteins containing an N-terminal arginine or lysine. The protein is Leucyl/phenylalanyl-tRNA--protein transferase of Aromatoleum aromaticum (strain DSM 19018 / LMG 30748 / EbN1) (Azoarcus sp. (strain EbN1)).